The primary structure comprises 347 residues: Phosphoribosylformylglycinamidine cyclo-ligase (347 aa).

Belongs to the AIR synthase family.

The protein localises to the cytoplasm. It carries out the reaction 2-formamido-N(1)-(5-O-phospho-beta-D-ribosyl)acetamidine + ATP = 5-amino-1-(5-phospho-beta-D-ribosyl)imidazole + ADP + phosphate + H(+). Its pathway is purine metabolism; IMP biosynthesis via de novo pathway; 5-amino-1-(5-phospho-D-ribosyl)imidazole from N(2)-formyl-N(1)-(5-phospho-D-ribosyl)glycinamide: step 2/2. The polypeptide is Phosphoribosylformylglycinamidine cyclo-ligase (Dechloromonas aromatica (strain RCB)).